The sequence spans 420 residues: Serine hydroxymethyltransferase (420 aa).

Residues L121 and 125-127 contribute to the (6S)-5,6,7,8-tetrahydrofolate site; that span reads GHL. K229 is modified (N6-(pyridoxal phosphate)lysine).

This sequence belongs to the SHMT family. Homodimer. The cofactor is pyridoxal 5'-phosphate.

It is found in the cytoplasm. It catalyses the reaction (6R)-5,10-methylene-5,6,7,8-tetrahydrofolate + glycine + H2O = (6S)-5,6,7,8-tetrahydrofolate + L-serine. It participates in one-carbon metabolism; tetrahydrofolate interconversion. Its pathway is amino-acid biosynthesis; glycine biosynthesis; glycine from L-serine: step 1/1. Its function is as follows. Catalyzes the reversible interconversion of serine and glycine with tetrahydrofolate (THF) serving as the one-carbon carrier. This reaction serves as the major source of one-carbon groups required for the biosynthesis of purines, thymidylate, methionine, and other important biomolecules. Also exhibits THF-independent aldolase activity toward beta-hydroxyamino acids, producing glycine and aldehydes, via a retro-aldol mechanism. This Pasteurella multocida (strain Pm70) protein is Serine hydroxymethyltransferase.